A 219-amino-acid chain; its full sequence is uncharacterized protein (219 aa).

Over residues Met1–Ser17 the composition is skewed to low complexity. A disordered region spans residues Met1 to Lys31. 2 consecutive transmembrane segments (helical) span residues Ser49–Lys69 and Leu83–Gly105. Residues Asn135 to Ile219 are disordered. Positions Asn144 to Asp212 are enriched in low complexity.

It is found in the membrane. This is an uncharacterized protein from Dictyostelium discoideum (Social amoeba).